A 298-amino-acid polypeptide reads, in one-letter code: MPIGFNKACLKNVFTVILVLIYLALTAVAVFLAYQTISDFMDKLNHPVMSVSYKEVEEFAAPGIVLFPGKAHLLSCMHHYHDNIPPLVALENLAKRECMKEEVIYHGPYSNQTEKRALVFRGPTDVRNRELIFLQLSRNETEEDFSAISYMIFAKFSDMLESSDKAAFMMDCERNYSMWTFSGGFRTWVKMSLVRTSGRRNESVEFRQESSVVKYIDKRPPLEQTNELFFIVFQWRDPFIQQVKDIVTANPWNTIAILCGVFMALFKAADFAKLSIKWMIRIRKRHIRAKMREMNQIS.

Over 1–12 the chain is Cytoplasmic; that stretch reads MPIGFNKACLKN. A helical membrane pass occupies residues 13 to 33; that stretch reads VFTVILVLIYLALTAVAVFLA. The Extracellular portion of the chain corresponds to 34–245; sequence YQTISDFMDK…RDPFIQQVKD (212 aa). A helical transmembrane segment spans residues 246–266; sequence IVTANPWNTIAILCGVFMALF. Residues 267–298 are Cytoplasmic-facing; it reads KAADFAKLSIKWMIRIRKRHIRAKMREMNQIS.

This sequence belongs to the proton-activated chloride channel family.

The protein localises to the cell membrane. The catalysed reaction is chloride(in) = chloride(out). Chloride channel gated by pH that facilitates the entry of chloride ions into cells upon exposure to extracellular acidic pH. Displays channel activity with distinct kinetic properties compared to the human ortholog channel. The chain is Proton-activated chloride channel from Danio rerio (Zebrafish).